Here is a 340-residue protein sequence, read N- to C-terminus: Probable D,D-dipeptide transport system permease protein DdpB (340 aa).

The Periplasmic portion of the chain corresponds to 1 to 11 (MTFWSILRQRC). The chain crosses the membrane as a helical span at residues 12 to 32 (WGLVLVVAGVCVITFIISHLI). The Cytoplasmic portion of the chain corresponds to 33–104 (PGDPARLLAG…IFFPATLELA (72 aa)). Residues 97–327 (FPATLELAFG…LVNLVVDLLY (231 aa)) form the ABC transmembrane type-1 domain. Residues 105–125 (FGALLLALLIGIPLGILSAVW) traverse the membrane as a helical segment. The Periplasmic portion of the chain corresponds to 126–135 (RNRWLDHLVR). A helical transmembrane segment spans residues 136–156 (IMAITGISTPAFWLGLGVIVL). The Cytoplasmic portion of the chain corresponds to 157–199 (FYGHLQILPGGGRLDDWLDPPTHVTGFYLLDALLEGNGEVFFN). Residues 200–220 (ALQHLILPALTLAFVHLGIVA) traverse the membrane as a helical segment. Residues 221–246 (RQIRSAMLEQLSEDYIRTARASGLPG) are Periplasmic-facing. A helical transmembrane segment spans residues 247-269 (WYIVLCYALPNALIPSITVLGLA). Over 270–279 (LGDLLYGAVL) the chain is Cytoplasmic. A helical transmembrane segment spans residues 280 to 300 (TETVFAWPGMGAWVVTSIQAL). A topological domain (periplasmic) is located at residue Asp301. Residues 302-322 (FPAVMGFAVVVSFAYVLVNLV) form a helical membrane-spanning segment. The Cytoplasmic segment spans residues 323 to 340 (VDLLYLWIDPRIGRGGGE).

This sequence belongs to the binding-protein-dependent transport system permease family. OppBC subfamily. The complex is composed of two ATP-binding proteins (DdpD and DdpF), two transmembrane proteins (DdpB and DdpC) and a solute-binding protein (DdpA).

Its subcellular location is the cell inner membrane. In terms of biological role, part of the ABC transporter complex DdpABCDF, which is probably involved in D,D-dipeptide transport. Probably responsible for the translocation of the substrate across the membrane. The protein is Probable D,D-dipeptide transport system permease protein DdpB (ddpB) of Escherichia coli (strain K12).